Consider the following 460-residue polypeptide: Nuclear distribution protein PAC1-1 (460 aa).

In terms of domain architecture, LisH spans Q9 to E41. Residues L74–T96 adopt a coiled-coil conformation. Residues S90 to R100 are compositionally biased toward polar residues. Residues S90–R115 are disordered. 8 WD repeats span residues S120 to K161, H163 to R203, G207 to T247, G250 to R289, G294 to A354, G355 to K394, A399 to D439, and Q441 to N460.

Belongs to the WD repeat LIS1/nudF family. Self-associates. Interacts with NDL1 and dynein.

The protein localises to the cytoplasm. Its subcellular location is the cytoskeleton. The protein resides in the spindle pole. Positively regulates the activity of the minus-end directed microtubule motor protein dynein. May enhance dynein-mediated microtubule sliding by targeting dynein to the microtubule plus end. Required for nuclear migration during vegetative growth as well as development. Required for retrograde early endosome (EE) transport from the hyphal tip. Required for localization of dynein to the mitotic spindle poles. Recruits additional proteins to the dynein complex at SPBs. This is Nuclear distribution protein PAC1-1 from Sordaria macrospora (strain ATCC MYA-333 / DSM 997 / K(L3346) / K-hell).